A 211-amino-acid polypeptide reads, in one-letter code: Suppressor of RNA silencing p3 (211 aa).

It belongs to the tenuiviruses p3 protein family. Homodimer.

Its subcellular location is the host cytoplasm. Functionally, acts as a suppressor of RNA-mediated gene silencing, also known as post-transcriptional gene silencing (PTGS), presumably through the binding of dsRNA. In Avena sativa (Oat), this protein is Suppressor of RNA silencing p3.